The following is a 207-amino-acid chain: MMNDFELSLKSLGVSFTSKSIDKLRFYIEKVLLFGTRFNLVSNNDRNFDAVLLHVLDSVAGLPIIKDKNPRQVLDVGSGAGFPGIVLALFDNFRKYILLERSNKKATFLRMISLELGLDNIEVLERDVDKEQNKYEFITIRAFRDIREYARILKLILKDGGLIVAYKGKLNKIKFEVSHIESLFNKIEIKSSTMNDGKERNFLLLYK.

Residues Gly77, Phe82, 100-102 (ERS), and Arg141 contribute to the S-adenosyl-L-methionine site.

It belongs to the methyltransferase superfamily. RNA methyltransferase RsmG family.

It localises to the cytoplasm. In terms of biological role, specifically methylates the N7 position of a guanine in 16S rRNA. The polypeptide is Ribosomal RNA small subunit methyltransferase G (Borrelia turicatae (strain 91E135)).